A 229-amino-acid polypeptide reads, in one-letter code: MRLNVAVFFGALFGALGVLLFLVAFGSDYWLLATEVGRCSGEQNIENITFHHEGFFWRCWFSGVVEENNSNIWKFWYTNQPPSKNCTHAYLSPYPFMRGEHNSTSYDSAIIYRGFWAVLLLLGVVAALTASFLIICAAPFSSHFLYKAGGGSYIASGVLFSLVVILYVIWVQAVADMESYRALRMRDCWEFTPSILYGWSFFLAPAGVFFSLLAGLLFLVVGRHIQIHH.

The first 26 residues, Met1–Gly26, serve as a signal peptide directing secretion. The Extracellular segment spans residues Ser27–Gly114. Asn47 is a glycosylation site (N-linked (GlcNAc...) asparagine). The segment at Thr49–Cys59 is interaction with ITGB1. N-linked (GlcNAc...) asparagine glycosylation is found at Asn68, Asn85, and Asn102. Residues Phe115 to Ile135 form a helical membrane-spanning segment. Topologically, residues Cys136 to Tyr153 are cytoplasmic. Residues Ile154 to Val174 traverse the membrane as a helical segment. The Extracellular portion of the chain corresponds to Ala175–Ser200. A helical transmembrane segment spans residues Phe201–Val221. Residues Gly222–His229 are Cytoplasmic-facing.

Belongs to the TMEM182 family. Interacts with ITGB1. As to expression, highly expressed in white adipose tissues (WAT), with 10-fold to 20-fold higher levels than in brown adipose tissue (BAT). Also expressed in skeletal muscle, heart and lung. Lower relative levels of expression in kidney, spleen, testis, brain and liver.

It is found in the cell membrane. In terms of biological role, negatively regulates myogenesis and skeletal muscle regeneration via its association with ITGB1. Modulates ITGB1 activation by decreasing ITGB1-LAMB1 interaction and inhibiting ITGB1-mediated intracellular signaling during myogenesis. The chain is Transmembrane protein 182 (Tmem182) from Mus musculus (Mouse).